Reading from the N-terminus, the 89-residue chain is Small ribosomal subunit protein uS15 (89 aa).

This sequence belongs to the universal ribosomal protein uS15 family. In terms of assembly, part of the 30S ribosomal subunit. Forms a bridge to the 50S subunit in the 70S ribosome, contacting the 23S rRNA.

One of the primary rRNA binding proteins, it binds directly to 16S rRNA where it helps nucleate assembly of the platform of the 30S subunit by binding and bridging several RNA helices of the 16S rRNA. In terms of biological role, forms an intersubunit bridge (bridge B4) with the 23S rRNA of the 50S subunit in the ribosome. This is Small ribosomal subunit protein uS15 from Dechloromonas aromatica (strain RCB).